Consider the following 71-residue polypeptide: Peptide Ctri9819 (71 aa).

Residues 1-23 (MKTVSTVAILAIFLLIVITTIET) form the signal peptide. Leucine amide is present on leucine 34. The propeptide occupies 38–71 (SKLETFKRIARTLSAGISAKRSLEDVNSLTGMSS).

This sequence belongs to the non-disulfide-bridged peptide (NDBP) superfamily. Short antimicrobial peptide (group 4) family. Expressed by the venom gland.

It localises to the secreted. Its function is as follows. Antimicrobial peptide. In Chaerilus tricostatus (Scorpion), this protein is Peptide Ctri9819.